We begin with the raw amino-acid sequence, 397 residues long: Ribosomal RNA large subunit methyltransferase I (397 aa).

The region spanning 2–80 (AIRIKLKPGR…KEETIDADFF (79 aa)) is the PUA domain.

The protein belongs to the methyltransferase superfamily. RlmI family.

It localises to the cytoplasm. It carries out the reaction cytidine(1962) in 23S rRNA + S-adenosyl-L-methionine = 5-methylcytidine(1962) in 23S rRNA + S-adenosyl-L-homocysteine + H(+). In terms of biological role, specifically methylates the cytosine at position 1962 (m5C1962) of 23S rRNA. This chain is Ribosomal RNA large subunit methyltransferase I, found in Shewanella frigidimarina (strain NCIMB 400).